The following is a 126-amino-acid chain: Fluoride-specific ion channel FluC (126 aa).

Helical transmembrane passes span 1-21, 40-60, 72-92, and 104-124; these read MIVI…FGLD, LATL…GGFA, AISI…VATV, and MVNI…GLSL. The Na(+) site is built by Gly79 and Thr82.

The protein belongs to the fluoride channel Fluc/FEX (TC 1.A.43) family.

The protein localises to the cell membrane. It carries out the reaction fluoride(in) = fluoride(out). Na(+) is not transported, but it plays an essential structural role and its presence is essential for fluoride channel function. Functionally, fluoride-specific ion channel. Important for reducing fluoride concentration in the cell, thus reducing its toxicity. This Renibacterium salmoninarum (strain ATCC 33209 / DSM 20767 / JCM 11484 / NBRC 15589 / NCIMB 2235) protein is Fluoride-specific ion channel FluC.